A 145-amino-acid polypeptide reads, in one-letter code: MLVPTRVKHRKQHRGRMHGKATRGNVITFGEYGLVAMEPAWITNRQIEAARIAMTRYIKRGGKVWIKIFPDKPITAKPAETRMGSGKGSPEYWVAVVKPGRVMFELAGVPEEIAKEALRLAMHKLPVKCKIVRREELEGGDANEN.

Belongs to the universal ribosomal protein uL16 family. Part of the 50S ribosomal subunit.

Its function is as follows. Binds 23S rRNA and is also seen to make contacts with the A and possibly P site tRNAs. This Desulfitobacterium hafniense (strain DSM 10664 / DCB-2) protein is Large ribosomal subunit protein uL16.